We begin with the raw amino-acid sequence, 87 residues long: UPF0367 protein P9211_01391 (87 aa).

This sequence belongs to the UPF0367 family.

This Prochlorococcus marinus (strain MIT 9211) protein is UPF0367 protein P9211_01391.